A 323-amino-acid polypeptide reads, in one-letter code: Methionyl-tRNA formyltransferase (323 aa).

117–120 (SLLP) contacts (6S)-5,6,7,8-tetrahydrofolate.

It belongs to the Fmt family.

It catalyses the reaction L-methionyl-tRNA(fMet) + (6R)-10-formyltetrahydrofolate = N-formyl-L-methionyl-tRNA(fMet) + (6S)-5,6,7,8-tetrahydrofolate + H(+). In terms of biological role, attaches a formyl group to the free amino group of methionyl-tRNA(fMet). The formyl group appears to play a dual role in the initiator identity of N-formylmethionyl-tRNA by promoting its recognition by IF2 and preventing the misappropriation of this tRNA by the elongation apparatus. The protein is Methionyl-tRNA formyltransferase of Acidovorax ebreus (strain TPSY) (Diaphorobacter sp. (strain TPSY)).